The primary structure comprises 494 residues: Cysteine--tRNA ligase (494 aa).

Cys29 is a Zn(2+) binding site. A 'HIGH' region motif is present at residues 31–41; it reads LTVSDDAHLGH. A disordered region spans residues 187–220; sequence KAGGVSPDDANTHRDDELPPLDGERGQTWASPWG. Residues 196–211 are compositionally biased toward basic and acidic residues; it reads ANTHRDDELPPLDGER. Positions 230, 255, and 259 each coordinate Zn(2+). Positions 287–291 match the 'KMSKS' region motif; sequence KMSSS.

Belongs to the class-I aminoacyl-tRNA synthetase family. Zn(2+) serves as cofactor.

It localises to the cytoplasm. It catalyses the reaction tRNA(Cys) + L-cysteine + ATP = L-cysteinyl-tRNA(Cys) + AMP + diphosphate. The chain is Cysteine--tRNA ligase from Halobacterium salinarum (strain ATCC 700922 / JCM 11081 / NRC-1) (Halobacterium halobium).